A 185-amino-acid polypeptide reads, in one-letter code: Ribosome-recycling factor (185 aa).

This sequence belongs to the RRF family.

It is found in the cytoplasm. In terms of biological role, responsible for the release of ribosomes from messenger RNA at the termination of protein biosynthesis. May increase the efficiency of translation by recycling ribosomes from one round of translation to another. This is Ribosome-recycling factor from Finegoldia magna (strain ATCC 29328 / DSM 20472 / WAL 2508) (Peptostreptococcus magnus).